A 674-amino-acid chain; its full sequence is Fidgetin-like protein 1 (674 aa).

Positions 157-179 (SQESDSLPNSAHDRDRTQDFPES) are disordered. Residues 167–179 (AHDRDRTQDFPES) show a composition bias toward basic and acidic residues. Residue Lys225 forms a Glycyl lysine isopeptide (Lys-Gly) (interchain with G-Cter in SUMO2) linkage. The residue at position 259 (Ser259) is a Phosphoserine. A necessary and sufficient for interaction with RAD51 region spans residues 295–344 (FKTAKEQLWVDQQKKYHQPQRASGSSYGGVKKSLGASRSRGILGKFVPPI). Lys339 carries the N6-acetyllysine modification. ATP is bound by residues Ala404 and 444 to 449 (GTGKTL).

This sequence belongs to the AAA ATPase family. Hexamer. Interacts (via N-terminal one-half region) with RAD51; the interaction is direct. Interacts (via N-terminal one-half region) with SPIDR (via the C-terminal region); the interaction is direct. Interacts with FIRRM; may regulate homologous recombination. It depends on Mg(2+) as a cofactor.

The protein localises to the nucleus. It localises to the cytoplasm. It is found in the perinuclear region. The catalysed reaction is ATP + H2O = ADP + phosphate + H(+). In terms of biological role, involved in DNA double-strand break (DBS) repair via homologous recombination (HR). Recruited at DSB sites independently of BRCA2, RAD51 and RAD51 paralogs in a H2AX-dependent manner. May regulate osteoblast proliferation and differentiation. May play a role in the control of male meiosis dynamic. The chain is Fidgetin-like protein 1 (FIGNL1) from Homo sapiens (Human).